We begin with the raw amino-acid sequence, 29 residues long: Cyclotide mang-A (29 aa).

The segment at residues 1-29 (GFPTCGETCTLGTCNTPGCTCSWPICTRD) is a cross-link (cyclopeptide (Gly-Asp)). Disulfide bonds link cysteine 5/cysteine 19, cysteine 9/cysteine 21, and cysteine 14/cysteine 26.

It belongs to the cyclotide family. Moebius subfamily. In terms of processing, this is a cyclic peptide.

Functionally, probably participates in a plant defense mechanism. The chain is Cyclotide mang-A from Melicytus angustifolius (Hymenanthera angustifolia).